We begin with the raw amino-acid sequence, 194 residues long: ATP synthase subunit delta (194 aa).

It belongs to the ATPase delta chain family. In terms of assembly, F-type ATPases have 2 components, F(1) - the catalytic core - and F(0) - the membrane proton channel. F(1) has five subunits: alpha(3), beta(3), gamma(1), delta(1), epsilon(1). F(0) has three main subunits: a(1), b(2) and c(10-14). The alpha and beta chains form an alternating ring which encloses part of the gamma chain. F(1) is attached to F(0) by a central stalk formed by the gamma and epsilon chains, while a peripheral stalk is formed by the delta and b chains.

The protein localises to the cell inner membrane. In terms of biological role, f(1)F(0) ATP synthase produces ATP from ADP in the presence of a proton or sodium gradient. F-type ATPases consist of two structural domains, F(1) containing the extramembraneous catalytic core and F(0) containing the membrane proton channel, linked together by a central stalk and a peripheral stalk. During catalysis, ATP synthesis in the catalytic domain of F(1) is coupled via a rotary mechanism of the central stalk subunits to proton translocation. This protein is part of the stalk that links CF(0) to CF(1). It either transmits conformational changes from CF(0) to CF(1) or is implicated in proton conduction. The protein is ATP synthase subunit delta of Parvibaculum lavamentivorans (strain DS-1 / DSM 13023 / NCIMB 13966).